A 335-amino-acid polypeptide reads, in one-letter code: Nonaprenyl diphosphate synthase (335 aa).

The isopentenyl diphosphate site is built by Lys57, Arg60, and His90. 2 residues coordinate Mg(2+): Asp97 and Asp101. A DDXXD motif motif is present at residues 97-101; that stretch reads DDVMD. Arg107 is an isopentenyl diphosphate binding site. The DDXXD motif motif lies at 223-227; the sequence is DDIID.

This sequence belongs to the FPP/GGPP synthase family. Requires Mg(2+) as cofactor.

The catalysed reaction is isopentenyl diphosphate + (2E)-geranyl diphosphate = (2E,6E)-farnesyl diphosphate + diphosphate. The enzyme catalyses isopentenyl diphosphate + (2E,6E)-farnesyl diphosphate = (2E,6E,10E)-geranylgeranyl diphosphate + diphosphate. It catalyses the reaction 5 isopentenyl diphosphate + (2E,6E,10E)-geranylgeranyl diphosphate = all-trans-nonaprenyl diphosphate + 5 diphosphate. It functions in the pathway isoprenoid biosynthesis; farnesyl diphosphate biosynthesis; farnesyl diphosphate from geranyl diphosphate and isopentenyl diphosphate. The protein operates within isoprenoid biosynthesis; geranylgeranyl diphosphate biosynthesis; geranylgeranyl diphosphate from farnesyl diphosphate and isopentenyl diphosphate: step 1/1. In terms of biological role, catalyzes the sequential condensations of isopentenyl pyrophosphate (IPP) with geranyl diphosphate (GPP) to yield (2E,6E)-farnesyl diphosphate (E,E-FPP), with E,E-FPP to yield geranylgeranyl diphosphate (GGPP) and with GGPP to yield nonaprenyl diphosphate. May also have weak activity with dimethylallyl diphosphate (DMAPP). The chain is Nonaprenyl diphosphate synthase from Mycobacterium tuberculosis (strain ATCC 25618 / H37Rv).